Here is a 771-residue protein sequence, read N- to C-terminus: Solute carrier family 7 member 14 (771 aa).

The next 6 helical transmembrane spans lie at 58–78 (LISLGVGSCVGTGMYVVSGLV), 83–103 (AGPGVIVSFIIAAVASILSGV), 119–141 (AYTYSYVTVGEFVAFFIGWNLIL), 187–207 (YPDLLALVIAVIVTIIVALGV), 216–236 (VLNVLNLAVWVFIMIAGLFFI), and 251–271 (WSGVLQGAATCFYAFIGFDII). A glycan (N-linked (GlcNAc...) asparagine) is linked at Asn282. Transmembrane regions (helical) follow at residues 291 to 311 (ASLVICLTAYVSVSMILTLMV), 336 to 356 (FVVAIGSVAGLTVSLLGSLFP), 384 to 404 (PVVACIVSGFLAALLSLLVSL), and 407 to 427 (LIEMMSIGTLLAYTLVSVCVL). Ser465, Ser468, Ser475, and Ser488 each carry phosphoserine. 4 helical membrane passes run 565 to 585 (VTICVLLLFILMFIFCSFIIF), 596 to 616 (WAILLVVLMMLLISVLVFVIL), 628 to 648 (MAPCLPFVPAFAMLVNIYLML), and 655 to 675 (WIRFAVWCFVGMLIYFGYGIW). Asn676 carries an N-linked (GlcNAc...) asparagine glycan. Positions 735-771 (SDAKANSRTSSKAKSKSKHKQNSEALIANDELDCSPE) are disordered. Residues 745-754 (SKAKSKSKHK) show a composition bias toward basic residues. Residues Ser757 and Ser769 each carry the phosphoserine modification.

It belongs to the amino acid-polyamine-organocation (APC) superfamily. As to expression, expressed in retina, brain and spinal cord. In the retina, expressed in the inner nuclear layer and photoreceptor layer (at protein level). Expressed in liver, spleen, lung, kidney intestine and brain (at protein level).

Its subcellular location is the lysosome membrane. It catalyses the reaction 4-aminobutanoate(in) = 4-aminobutanoate(out). In terms of biological role, imports 4-aminobutanoate (GABA) into lysosomes. May act as a GABA sensor that regulates mTORC2-dependent INS signaling and gluconeogenesis. The transport mechanism and substrate selectivity remain to be elucidated. The chain is Solute carrier family 7 member 14 from Mus musculus (Mouse).